The sequence spans 964 residues: E3 ubiquitin-protein ligase TRIM37 (964 aa).

At Met-1 the chain carries N-acetylmethionine. An RING-type; degenerate zinc finger spans residues 15–55 (CFICMEKLRDARLCPHCSKLCCFSCIRRWLTEQRAQCPHCR). Residues 90 to 132 (NEKDKCENHHEKLSVFCWTCKKCICHQCALWGGMHGGHTFKPL) form a B box-type zinc finger. Zn(2+)-binding residues include Cys-95, His-98, Cys-117, and His-124. A coiled-coil region spans residues 132 to 234 (LAEIYEQHVT…VEHQLRSCSK (103 aa)). The MATH domain maps to 276-403 (YDSATFVLEN…NDTVILRFQV (128 aa)). Positions 419 to 450 (ITQLEAAQTSYIQQINNLKERLTIELSRTQKS) form a coiled coil. At Ser-454 the chain carries Phosphoserine. Disordered stretches follow at residues 477 to 513 (CSDM…HHEL), 530 to 554 (QLDG…IDEE), and 640 to 663 (RPPA…RKQQ). The span at 503-513 (KIQNEDYHHEL) shows a compositional bias: basic and acidic residues. Over residues 534-544 (SSSSASSTATS) the composition is skewed to low complexity. Positions 673–700 (KMLKRLKTQMAEVRCMKTDVKNTLSEIK) form a coiled coil. A compositionally biased stretch (polar residues) spans 752–761 (NSTNKKSNSP). Disordered stretches follow at residues 752 to 812 (NSTN…SPRA) and 891 to 964 (GASA…NSGR). A compositionally biased stretch (basic and acidic residues) spans 776 to 788 (RAVDPGENSRSKG). Residues 794–807 (SEGSPGSSQSGSRH) are compositionally biased toward low complexity. Residues 904-916 (SDIECDTENEEQE) are compositionally biased toward acidic residues. The segment covering 955–964 (SFNTDENSGR) has biased composition (polar residues).

It belongs to the TRIM/RBCC family. As to quaternary structure, associates with the PRC2/EED-EZH2 complex. Auto-ubiquitinated. As to expression, ubiquitous. Highly expressed in testis, while it is weakly expressed in other tissues.

The protein resides in the chromosome. It is found in the cytoplasm. It localises to the perinuclear region. Its subcellular location is the peroxisome membrane. It catalyses the reaction S-ubiquitinyl-[E2 ubiquitin-conjugating enzyme]-L-cysteine + [acceptor protein]-L-lysine = [E2 ubiquitin-conjugating enzyme]-L-cysteine + N(6)-ubiquitinyl-[acceptor protein]-L-lysine.. The protein operates within protein modification; protein ubiquitination. Its function is as follows. E3 ubiquitin-protein ligase required to prevent centriole reduplication. Probably acts by ubiquitinating positive regulators of centriole reduplication. Mediates monoubiquitination of 'Lys-119' of histone H2A (H2AK119Ub), a specific tag for epigenetic transcriptional repression: associates with some Polycomb group (PcG) multiprotein PRC2-like complex and mediates repression of target genes. Also acts as a positive regulator of peroxisome import by mediating monoubiquitination of PEX5 at 'Lys-472': monoubiquitination promotes PEX5 stabilitation by preventing its polyubiquitination and degradation by the proteasome. Has anti-HIV activity. The protein is E3 ubiquitin-protein ligase TRIM37 of Homo sapiens (Human).